The primary structure comprises 445 residues: Probable protein phosphatase 2C 14 (445 aa).

The region spanning 120 to 440 is the PPM-type phosphatase domain; sequence GFGVVSRNGK…DDITVVIIDL (321 aa). Asp156, Gly157, and Asp318 together coordinate Mn(2+). The tract at residues 384–404 is disordered; it reads NSENESPSLNREIGSSPSKSP. Residues 390–404 show a composition bias toward polar residues; it reads PSLNREIGSSPSKSP. Residue Asp431 participates in Mn(2+) binding.

The protein belongs to the PP2C family. The cofactor is Mg(2+). Mn(2+) serves as cofactor.

It catalyses the reaction O-phospho-L-seryl-[protein] + H2O = L-seryl-[protein] + phosphate. The catalysed reaction is O-phospho-L-threonyl-[protein] + H2O = L-threonyl-[protein] + phosphate. The chain is Probable protein phosphatase 2C 14 from Arabidopsis thaliana (Mouse-ear cress).